A 455-amino-acid polypeptide reads, in one-letter code: UDP-N-acetylmuramate--L-alanine ligase (455 aa).

Residue 109–115 (GTHGKTT) participates in ATP binding.

Belongs to the MurCDEF family.

It localises to the cytoplasm. The catalysed reaction is UDP-N-acetyl-alpha-D-muramate + L-alanine + ATP = UDP-N-acetyl-alpha-D-muramoyl-L-alanine + ADP + phosphate + H(+). The protein operates within cell wall biogenesis; peptidoglycan biosynthesis. Cell wall formation. The sequence is that of UDP-N-acetylmuramate--L-alanine ligase from Caldicellulosiruptor saccharolyticus (strain ATCC 43494 / DSM 8903 / Tp8T 6331).